A 408-amino-acid chain; its full sequence is Transmembrane protein 237 (408 aa).

Over residues 1–14 the composition is skewed to basic and acidic residues; that stretch reads MRTDSGARLEEGHL. A disordered region spans residues 1-137; that stretch reads MRTDSGARLE…RRKTKKTQPA (137 aa). Phosphoserine is present on residues S25 and S49. Residues 60 to 77 show a composition bias toward basic and acidic residues; sequence RPSEGNEPSTKELKEHPE. Positions 95 to 106 are enriched in low complexity; that stretch reads TSSTQKKSSSSS. The next 4 membrane-spanning stretches (helical) occupy residues 227-247, 268-288, 303-323, and 358-378; these read MIGL…IVVI, LAYP…ISAF, FLAL…LILS, and WIVV…FLSY.

It belongs to the TMEM237 family. Part of the tectonic-like complex (also named B9 complex). Interacts with TMEM107.

The protein localises to the membrane. Its subcellular location is the cell projection. It is found in the cilium. In terms of biological role, component of the transition zone in primary cilia. Required for ciliogenesis. The sequence is that of Transmembrane protein 237 (TMEM237) from Homo sapiens (Human).